Reading from the N-terminus, the 230-residue chain is Small ribosomal subunit protein uS3 (230 aa).

The region spanning 39 to 107 is the KH type-2 domain; sequence VRNYLRQKLA…PIHVNIEEIR (69 aa). Positions 210–230 are disordered; it reads SSKPEHESKQRKAGRRNAAAN.

It belongs to the universal ribosomal protein uS3 family. As to quaternary structure, part of the 30S ribosomal subunit. Forms a tight complex with proteins S10 and S14.

Binds the lower part of the 30S subunit head. Binds mRNA in the 70S ribosome, positioning it for translation. The polypeptide is Small ribosomal subunit protein uS3 (Neisseria gonorrhoeae (strain ATCC 700825 / FA 1090)).